Reading from the N-terminus, the 91-residue chain is Probable Fe(2+)-trafficking protein (91 aa).

The protein belongs to the Fe(2+)-trafficking protein family. In terms of assembly, monomer.

Could be a mediator in iron transactions between iron acquisition and iron-requiring processes, such as synthesis and/or repair of Fe-S clusters in biosynthetic enzymes. This chain is Probable Fe(2+)-trafficking protein, found in Escherichia coli O6:H1 (strain CFT073 / ATCC 700928 / UPEC).